The following is a 270-amino-acid chain: Catechol 1,2-dioxygenase (270 aa).

Residues Y152, Y186, H210, and H212 each coordinate Fe cation.

Belongs to the intradiol ring-cleavage dioxygenase family. Requires Fe(3+) as cofactor.

It catalyses the reaction catechol + O2 = cis,cis-muconate + 2 H(+). The protein is Catechol 1,2-dioxygenase (catA) of Rhodococcus opacus (Nocardia opaca).